The sequence spans 407 residues: MTETTPKTAPWTVQKRTAVLVLADGTVIEGKGLGATGAVEAEVVFNTALTGYEEILTDPSYAGQIVTFTFPHIGNVGANAEDIEDLTPANRHGAVGAIFKADITAPSNFRAAEDLDSWLKHRGIIALAGIDTRALTALIRERGAQNAVIAHDPNGNFDLDALKARAANWCGLENLDLAKDVTIGQSLVWKELPWTLQDGYGEQDAPQYHVVALDFGVKRNILRLLTGLGAKVTVLPATATAEDVLAHNPDGVFLSNGPGDPAATGEYAVPTIGKLVETGIPLFGICLGHQMLALALGGRTEKMHQGHHGANHPVKDYTTGKVEIVSMNHGFAVDSDSLPENVEETHVSLFDGTNCGLRVVGKPVFSVQHHPEASPGPQDSHYLFRRFINLIRERKGQAPLPESEQAA.

The tract at residues methionine 1–alanine 205 is CPSase. Residues serine 60, glycine 257, and glycine 259 each contribute to the L-glutamine site. Residues histidine 209–glutamine 397 form the Glutamine amidotransferase type-1 domain. The active-site Nucleophile is cysteine 286. 5 residues coordinate L-glutamine: leucine 287, glutamine 290, asparagine 328, glycine 330, and phenylalanine 331. Active-site residues include histidine 370 and glutamate 372.

The protein belongs to the CarA family. As to quaternary structure, composed of two chains; the small (or glutamine) chain promotes the hydrolysis of glutamine to ammonia, which is used by the large (or ammonia) chain to synthesize carbamoyl phosphate. Tetramer of heterodimers (alpha,beta)4.

It carries out the reaction hydrogencarbonate + L-glutamine + 2 ATP + H2O = carbamoyl phosphate + L-glutamate + 2 ADP + phosphate + 2 H(+). It catalyses the reaction L-glutamine + H2O = L-glutamate + NH4(+). It functions in the pathway amino-acid biosynthesis; L-arginine biosynthesis; carbamoyl phosphate from bicarbonate: step 1/1. It participates in pyrimidine metabolism; UMP biosynthesis via de novo pathway; (S)-dihydroorotate from bicarbonate: step 1/3. Functionally, small subunit of the glutamine-dependent carbamoyl phosphate synthetase (CPSase). CPSase catalyzes the formation of carbamoyl phosphate from the ammonia moiety of glutamine, carbonate, and phosphate donated by ATP, constituting the first step of 2 biosynthetic pathways, one leading to arginine and/or urea and the other to pyrimidine nucleotides. The small subunit (glutamine amidotransferase) binds and cleaves glutamine to supply the large subunit with the substrate ammonia. This is Carbamoyl phosphate synthase small chain from Brucella suis (strain ATCC 23445 / NCTC 10510).